Consider the following 120-residue polypeptide: Large ribosomal subunit protein eL8 (120 aa).

Belongs to the eukaryotic ribosomal protein eL8 family. As to quaternary structure, part of the 50S ribosomal subunit. Probably part of the RNase P complex.

The protein resides in the cytoplasm. Multifunctional RNA-binding protein that recognizes the K-turn motif in ribosomal RNA, the RNA component of RNase P, box H/ACA, box C/D and box C'/D' sRNAs. This Halorubrum lacusprofundi (strain ATCC 49239 / DSM 5036 / JCM 8891 / ACAM 34) protein is Large ribosomal subunit protein eL8.